The sequence spans 491 residues: NADPH:adrenodoxin oxidoreductase, mitochondrial (491 aa).

The transit peptide at 1–32 (MASRCWRWWGWSAWPRTRLPPAGSTPSFCHHF) directs the protein to the mitochondrion. FAD-binding residues include A49, E69, L77, and V113. NADP(+)-binding positions include 184-187 (QGNV), 228-229 (RR), and E240. Phosphoserine occurs at positions 310 and 317. FAD-binding positions include W398 and 405–407 (GVI). Position 405 (G405) interacts with NADP(+).

This sequence belongs to the ferredoxin--NADP reductase type 1 family. In terms of assembly, monomer. Interacts directly with FDX1. It depends on FAD as a cofactor.

Its subcellular location is the mitochondrion. It localises to the mitochondrion inner membrane. It carries out the reaction 2 reduced [adrenodoxin] + NADP(+) + H(+) = 2 oxidized [adrenodoxin] + NADPH. The catalysed reaction is 2 reduced [2Fe-2S]-[ferredoxin] + NADP(+) + H(+) = 2 oxidized [2Fe-2S]-[ferredoxin] + NADPH. The protein operates within steroid metabolism; cholesterol metabolism. Functionally, serves as the first electron transfer protein in all the mitochondrial P450 systems including cholesterol side chain cleavage in all steroidogenic tissues, steroid 11-beta hydroxylation in the adrenal cortex, 25-OH-vitamin D3-24 hydroxylation in the kidney, and sterol C-27 hydroxylation in the liver. Also acts as a ferredoxin--NADP(+) reductase essential for coenzyme Q biosynthesis: together with FDX2, transfers the electrons required for the hydroxylation reaction performed by COQ6. In Homo sapiens (Human), this protein is NADPH:adrenodoxin oxidoreductase, mitochondrial.